We begin with the raw amino-acid sequence, 230 residues long: 5'-methylthioadenosine/S-adenosylhomocysteine nucleosidase (230 aa).

The active-site Proton acceptor is Glu-12. Substrate contacts are provided by residues Gly-78, Ile-153, and 174 to 175; that span reads ME. The active-site Proton donor is Asp-198.

The protein belongs to the PNP/UDP phosphorylase family. MtnN subfamily.

The enzyme catalyses S-adenosyl-L-homocysteine + H2O = S-(5-deoxy-D-ribos-5-yl)-L-homocysteine + adenine. It catalyses the reaction S-methyl-5'-thioadenosine + H2O = 5-(methylsulfanyl)-D-ribose + adenine. The catalysed reaction is 5'-deoxyadenosine + H2O = 5-deoxy-D-ribose + adenine. The protein operates within amino-acid biosynthesis; L-methionine biosynthesis via salvage pathway; S-methyl-5-thio-alpha-D-ribose 1-phosphate from S-methyl-5'-thioadenosine (hydrolase route): step 1/2. Its function is as follows. Catalyzes the irreversible cleavage of the glycosidic bond in both 5'-methylthioadenosine (MTA) and S-adenosylhomocysteine (SAH/AdoHcy) to adenine and the corresponding thioribose, 5'-methylthioribose and S-ribosylhomocysteine, respectively. Also cleaves 5'-deoxyadenosine, a toxic by-product of radical S-adenosylmethionine (SAM) enzymes, into 5-deoxyribose and adenine. This Shewanella denitrificans (strain OS217 / ATCC BAA-1090 / DSM 15013) protein is 5'-methylthioadenosine/S-adenosylhomocysteine nucleosidase.